The sequence spans 329 residues: GTP 3',8-cyclase (329 aa).

The 227-residue stretch at 8-234 (AFARKFYYLR…QQRARSDGPA (227 aa)) folds into the Radical SAM core domain. Arginine 17 lines the GTP pocket. Positions 24 and 28 each coordinate [4Fe-4S] cluster. An S-adenosyl-L-methionine-binding site is contributed by tyrosine 30. Cysteine 31 contacts [4Fe-4S] cluster. Arginine 68 is a binding site for GTP. Residue glycine 72 participates in S-adenosyl-L-methionine binding. Position 99 (threonine 99) interacts with GTP. Residue serine 123 coordinates S-adenosyl-L-methionine. A GTP-binding site is contributed by lysine 160. Methionine 194 lines the S-adenosyl-L-methionine pocket. 2 residues coordinate [4Fe-4S] cluster: cysteine 257 and cysteine 260. 262-264 (RLR) contacts GTP. Cysteine 274 serves as a coordination point for [4Fe-4S] cluster.

Belongs to the radical SAM superfamily. MoaA family. As to quaternary structure, monomer and homodimer. It depends on [4Fe-4S] cluster as a cofactor.

It carries out the reaction GTP + AH2 + S-adenosyl-L-methionine = (8S)-3',8-cyclo-7,8-dihydroguanosine 5'-triphosphate + 5'-deoxyadenosine + L-methionine + A + H(+). It participates in cofactor biosynthesis; molybdopterin biosynthesis. In terms of biological role, catalyzes the cyclization of GTP to (8S)-3',8-cyclo-7,8-dihydroguanosine 5'-triphosphate. The sequence is that of GTP 3',8-cyclase from Pectobacterium atrosepticum (strain SCRI 1043 / ATCC BAA-672) (Erwinia carotovora subsp. atroseptica).